Consider the following 151-residue polypeptide: Transcriptional repressor NrdR (151 aa).

The segment at 3–34 is a zinc-finger region; the sequence is CPYCAYGESKVVDSRSTEDGSSIRRRRECLKC. One can recognise an ATP-cone domain in the interval 49 to 139; the sequence is ILVIKKNMSR…VYRQFKDINT (91 aa).

Belongs to the NrdR family. Zn(2+) serves as cofactor.

Its function is as follows. Negatively regulates transcription of bacterial ribonucleotide reductase nrd genes and operons by binding to NrdR-boxes. This is Transcriptional repressor NrdR from Clostridium botulinum (strain ATCC 19397 / Type A).